Here is a 303-residue protein sequence, read N- to C-terminus: Glycine--tRNA ligase alpha subunit (303 aa).

The protein belongs to the class-II aminoacyl-tRNA synthetase family. Tetramer of two alpha and two beta subunits.

Its subcellular location is the cytoplasm. The catalysed reaction is tRNA(Gly) + glycine + ATP = glycyl-tRNA(Gly) + AMP + diphosphate. The protein is Glycine--tRNA ligase alpha subunit of Salmonella paratyphi A (strain ATCC 9150 / SARB42).